The primary structure comprises 179 residues: UPF0316 protein BH0621 (179 aa).

3 helical membrane-spanning segments follow: residues 9–29 (ALTMILIILIINVVYVTLFTV), 41–61 (LAATVSMIEIIVYVLGLSLVL), and 67–87 (IENLIAYAVGYGIGVITGMKV).

It belongs to the UPF0316 family.

Its subcellular location is the cell membrane. The polypeptide is UPF0316 protein BH0621 (Halalkalibacterium halodurans (strain ATCC BAA-125 / DSM 18197 / FERM 7344 / JCM 9153 / C-125) (Bacillus halodurans)).